The chain runs to 282 residues: Inositol oxygenase (282 aa).

The disordered stretch occupies residues 1–25; the sequence is MKDPDPSQVYRPDMDPEAAKDKGSF. Over residues 12 to 24 the composition is skewed to basic and acidic residues; that stretch reads PDMDPEAAKDKGS. Substrate is bound at residue arginine 26. Residue serine 30 is modified to Phosphoserine. Residue 82 to 84 coordinates substrate; that stretch reads DES. Positions 95, 120, and 121 each coordinate Fe cation. Residues lysine 124 and 138-139 each bind substrate; that span reads GD. Histidine 191, histidine 217, and aspartate 250 together coordinate Fe cation. 217–218 is a binding site for substrate; the sequence is HS.

This sequence belongs to the myo-inositol oxygenase family. It depends on Fe cation as a cofactor. In terms of processing, the N-terminus is blocked. Kidney specific.

It is found in the cytoplasm. It catalyses the reaction myo-inositol + O2 = D-glucuronate + H2O + H(+). It functions in the pathway polyol metabolism; myo-inositol degradation into D-glucuronate; D-glucuronate from myo-inositol: step 1/1. In Sus scrofa (Pig), this protein is Inositol oxygenase (MIOX).